The following is a 261-amino-acid chain: 1-(5-phosphoribosyl)-5-[(5-phosphoribosylamino)methylideneamino] imidazole-4-carboxamide isomerase (261 aa).

Aspartate 8 serves as the catalytic Proton acceptor. Aspartate 130 functions as the Proton donor in the catalytic mechanism.

The protein belongs to the HisA/HisF family.

Its subcellular location is the cytoplasm. The catalysed reaction is 1-(5-phospho-beta-D-ribosyl)-5-[(5-phospho-beta-D-ribosylamino)methylideneamino]imidazole-4-carboxamide = 5-[(5-phospho-1-deoxy-D-ribulos-1-ylimino)methylamino]-1-(5-phospho-beta-D-ribosyl)imidazole-4-carboxamide. Its pathway is amino-acid biosynthesis; L-histidine biosynthesis; L-histidine from 5-phospho-alpha-D-ribose 1-diphosphate: step 4/9. This is 1-(5-phosphoribosyl)-5-[(5-phosphoribosylamino)methylideneamino] imidazole-4-carboxamide isomerase from Prosthecochloris aestuarii (strain DSM 271 / SK 413).